Consider the following 52-residue polypeptide: Protein YabQ (52 aa).

In terms of biological role, identified as a multicopy suppressor of the slow growth phenotype of an rsgA (yjeQ) deletion mutant. The sequence is that of Protein YabQ (yabQ) from Escherichia coli (strain K12).